Here is a 134-residue protein sequence, read N- to C-terminus: Putative pre-16S rRNA nuclease (134 aa).

The protein belongs to the YqgF nuclease family.

The protein resides in the cytoplasm. Its function is as follows. Could be a nuclease involved in processing of the 5'-end of pre-16S rRNA. This Helicobacter pylori (strain P12) protein is Putative pre-16S rRNA nuclease.